The chain runs to 214 residues: Redox-sensing transcriptional repressor Rex (214 aa).

Positions 17-56 form a DNA-binding region, H-T-H motif; sequence LYYRIFKRFHADQVEKASSKQIADAMGIDSATVRRDFSYF. 91-96 is a binding site for NAD(+); sequence GCGNIG.

Belongs to the transcriptional regulatory Rex family. In terms of assembly, homodimer.

The protein localises to the cytoplasm. Functionally, modulates transcription in response to changes in cellular NADH/NAD(+) redox state. This Streptococcus pyogenes serotype M1 protein is Redox-sensing transcriptional repressor Rex.